Reading from the N-terminus, the 265-residue chain is 4-hydroxy-tetrahydrodipicolinate reductase (265 aa).

Residues 7 to 12 (GASGRM) and Asp33 each bind NAD(+). Arg34 contributes to the NADP(+) binding site. NAD(+)-binding positions include 96 to 98 (GTT) and 120 to 123 (AANM). His153 functions as the Proton donor/acceptor in the catalytic mechanism. Position 154 (His154) interacts with (S)-2,3,4,5-tetrahydrodipicolinate. Lys157 acts as the Proton donor in catalysis. 163–164 (GT) contributes to the (S)-2,3,4,5-tetrahydrodipicolinate binding site.

It belongs to the DapB family.

It is found in the cytoplasm. It catalyses the reaction (S)-2,3,4,5-tetrahydrodipicolinate + NAD(+) + H2O = (2S,4S)-4-hydroxy-2,3,4,5-tetrahydrodipicolinate + NADH + H(+). The catalysed reaction is (S)-2,3,4,5-tetrahydrodipicolinate + NADP(+) + H2O = (2S,4S)-4-hydroxy-2,3,4,5-tetrahydrodipicolinate + NADPH + H(+). It functions in the pathway amino-acid biosynthesis; L-lysine biosynthesis via DAP pathway; (S)-tetrahydrodipicolinate from L-aspartate: step 4/4. In terms of biological role, catalyzes the conversion of 4-hydroxy-tetrahydrodipicolinate (HTPA) to tetrahydrodipicolinate. This Burkholderia multivorans (strain ATCC 17616 / 249) protein is 4-hydroxy-tetrahydrodipicolinate reductase.